We begin with the raw amino-acid sequence, 366 residues long: MQNLLPTESYEQQLTEKVSRLKNMMAPFQPPRPEVFRSPLSHYRMRAEFRIWHEQDDLYHIMFDQQTKQRIRLVQFPVASKLINKMMVVLIDSIRSEQILCHKLFQIDYLSTCSNKILVSLLYHKKLGEEWTQQALRLREALRHKGFDVELIGRAAKTKITLDHDYIDEVLPVAGRKMIYRQVENSFTQPNASVNIHMLEWAINITKDSKGDLLELYCGNGNFSLALAQNFERVLATEIAKPSVAAAQYNITANGIDNVQIIRMSAEEFTQAMNGEREFNRLQGINLKSYQCETIFVDPPRSGLDEKTLEMVRAYPRILYISCNPETLCHNLETLTQTHKISHLALFDQFPYTHHMECGVLLEKLN.

S-adenosyl-L-methionine is bound by residues Gln189, Tyr217, Asn222, Glu238, and Asp298. Residue Cys323 is the Nucleophile of the active site. Glu357 (proton acceptor) is an active-site residue.

It belongs to the class I-like SAM-binding methyltransferase superfamily. RNA M5U methyltransferase family. TrmA subfamily.

The catalysed reaction is uridine(54) in tRNA + S-adenosyl-L-methionine = 5-methyluridine(54) in tRNA + S-adenosyl-L-homocysteine + H(+). The enzyme catalyses uridine(341) in tmRNA + S-adenosyl-L-methionine = 5-methyluridine(341) in tmRNA + S-adenosyl-L-homocysteine + H(+). In terms of biological role, dual-specificity methyltransferase that catalyzes the formation of 5-methyluridine at position 54 (m5U54) in all tRNAs, and that of position 341 (m5U341) in tmRNA (transfer-mRNA). This chain is tRNA/tmRNA (uracil-C(5))-methyltransferase, found in Photorhabdus laumondii subsp. laumondii (strain DSM 15139 / CIP 105565 / TT01) (Photorhabdus luminescens subsp. laumondii).